The following is a 542-amino-acid chain: CTP synthase (542 aa).

The segment at 1-265 is amidoligase domain; it reads MTRYIFVTGG…DDFVVERFGL (265 aa). Residue Ser13 coordinates CTP. Ser13 is a UTP binding site. Residues 14-19 and Asp71 each bind ATP; that span reads SLGKGI. Asp71 and Glu139 together coordinate Mg(2+). CTP contacts are provided by residues 146–148, 186–191, and Lys222; these read DIE and KTKPTQ. UTP is bound by residues 186-191 and Lys222; that span reads KTKPTQ. The Glutamine amidotransferase type-1 domain occupies 290 to 541; it reads TIAMVGKYME…VKAALAQKNK (252 aa). Gly351 contacts L-glutamine. Cys378 (nucleophile; for glutamine hydrolysis) is an active-site residue. L-glutamine contacts are provided by residues 379 to 382, Glu402, and Arg469; that span reads LGMQ. Residues His514 and Glu516 contribute to the active site.

The protein belongs to the CTP synthase family. In terms of assembly, homotetramer.

The enzyme catalyses UTP + L-glutamine + ATP + H2O = CTP + L-glutamate + ADP + phosphate + 2 H(+). The catalysed reaction is L-glutamine + H2O = L-glutamate + NH4(+). It carries out the reaction UTP + NH4(+) + ATP = CTP + ADP + phosphate + 2 H(+). It functions in the pathway pyrimidine metabolism; CTP biosynthesis via de novo pathway; CTP from UDP: step 2/2. Its activity is regulated as follows. Allosterically activated by GTP, when glutamine is the substrate; GTP has no effect on the reaction when ammonia is the substrate. The allosteric effector GTP functions by stabilizing the protein conformation that binds the tetrahedral intermediate(s) formed during glutamine hydrolysis. Inhibited by the product CTP, via allosteric rather than competitive inhibition. Its function is as follows. Catalyzes the ATP-dependent amination of UTP to CTP with either L-glutamine or ammonia as the source of nitrogen. Regulates intracellular CTP levels through interactions with the four ribonucleotide triphosphates. The protein is CTP synthase of Pseudomonas putida (strain W619).